Consider the following 598-residue polypeptide: Thiol:disulfide interchange protein DsbD (598 aa).

The signal sequence occupies residues 1-21 (MRALLTFFVAGLLVLSSPAMA). Residues C130 and C136 are joined by a disulfide bond. The disordered stretch occupies residues 158 to 180 (TMPTQTASPLDTSTANTSTPQPL). Residues 159–180 (MPTQTASPLDTSTANTSTPQPL) are compositionally biased toward polar residues. The next 8 helical transmembrane spans lie at 198–220 (LLFL…YPIL), 240–262 (LVYV…SAGL), 274–296 (LIGL…TLQL), 324–346 (AISG…LYVA), 353–375 (TGGV…VAVF), 385–407 (GWMD…FLLE), 414–431 (WSTA…GWLY), and 446–468 (AVGI…YWFA). C212 and C333 are joined by a disulfide. Residues 456-598 (FASAQPALNY…FLEHIQRISN (143 aa)) enclose the Thioredoxin domain. An intrachain disulfide couples C513 to C516.

It belongs to the thioredoxin family. DsbD subfamily.

It is found in the cell inner membrane. The enzyme catalyses [protein]-dithiol + NAD(+) = [protein]-disulfide + NADH + H(+). The catalysed reaction is [protein]-dithiol + NADP(+) = [protein]-disulfide + NADPH + H(+). Functionally, required to facilitate the formation of correct disulfide bonds in some periplasmic proteins and for the assembly of the periplasmic c-type cytochromes. Acts by transferring electrons from cytoplasmic thioredoxin to the periplasm. This transfer involves a cascade of disulfide bond formation and reduction steps. This Vibrio vulnificus (strain YJ016) protein is Thiol:disulfide interchange protein DsbD.